The primary structure comprises 416 residues: Gamma-glutamyl phosphate reductase (416 aa).

Belongs to the gamma-glutamyl phosphate reductase family.

It is found in the cytoplasm. It carries out the reaction L-glutamate 5-semialdehyde + phosphate + NADP(+) = L-glutamyl 5-phosphate + NADPH + H(+). The protein operates within amino-acid biosynthesis; L-proline biosynthesis; L-glutamate 5-semialdehyde from L-glutamate: step 2/2. In terms of biological role, catalyzes the NADPH-dependent reduction of L-glutamate 5-phosphate into L-glutamate 5-semialdehyde and phosphate. The product spontaneously undergoes cyclization to form 1-pyrroline-5-carboxylate. This is Gamma-glutamyl phosphate reductase from Leptospira borgpetersenii serovar Hardjo-bovis (strain JB197).